We begin with the raw amino-acid sequence, 267 residues long: Small ribosomal subunit protein mS23 (267 aa).

Residues 230–267 are disordered; the sequence is VKTASKDGKSSNGSMGAEDVVEKTTSAWETEFVEEESS.

Belongs to the mitochondrion-specific ribosomal protein mS23 family. Component of the mitochondrial small ribosomal subunit.

The protein resides in the mitochondrion. The chain is Small ribosomal subunit protein mS23 (RSM25) from Meyerozyma guilliermondii (strain ATCC 6260 / CBS 566 / DSM 6381 / JCM 1539 / NBRC 10279 / NRRL Y-324) (Yeast).